A 333-amino-acid chain; its full sequence is MAGLKLLKSLALHDDKCWSVDVNNGGIMATGSTDRKIKLVDIRSFQIIEELDDTAHKKTVRSVAWRPHSNILAAGSFDSTVSIWGKDDDGYNDENDLETELLAIIEGHENEIKCVAWSHDGELLATCSRDKSVWIWEADEMGEEFECISVLQEHSQDVKHVIWHQSLPLLASSSYDDTVRIWKDCDDDWECCAVLNGHEGTVWSSDFEKSNSNVRLCSGSDDGTVRIWCLEDDNGEYEQEWIQESILPKAHTRAVYSVNWSPKGYIASTGSDGRLVIYKESEDGWIVECIHELTHGVYETNMVKWVEYGSKDVILLITAGDDGHVNVWKFDEN.

WD repeat units follow at residues 12–50, 55–94, 107–146, 153–192, 197–238, 250–288, and 298–333; these read LHDDKCWSVDVNNGGIMATGSTDRKIKLVDIRSFQIIEE, AHKKTVRSVAWRPHSNILAAGSFDSTVSIWGKDDDGYNDE, GHENEIKCVAWSHDGELLATCSRDKSVWIWEADEMGEEFE, EHSQDVKHVIWHQSLPLLASSSYDDTVRIWKDCDDDWECC, GHEG…GEYE, AHTRAVYSVNWSPKGYIASTGSDGRLVIYKESEDGWIVE, and YETNMVKWVEYGSKDVILLITAGDDGHVNVWKFDEN.

It belongs to the WD repeat CIA1 family. In terms of assembly, interacts with NAR1.

Its subcellular location is the cytoplasm. The protein resides in the nucleus. In terms of biological role, essential component of the cytosolic iron-sulfur (Fe/S) protein assembly machinery. Required for the maturation of extramitochondrial Fe/S proteins. In Kluyveromyces lactis (strain ATCC 8585 / CBS 2359 / DSM 70799 / NBRC 1267 / NRRL Y-1140 / WM37) (Yeast), this protein is Probable cytosolic iron-sulfur protein assembly protein 1.